The following is an 86-amino-acid chain: U-actitoxin-Avd10a (86 aa).

The first 20 residues, 1 to 20 (MSRIAILLFVAFLLVAGISA), serve as a signal peptide directing secretion. Residues 21–42 (KSTAHFKKNVLADLFKERRFNA) constitute a propeptide that is removed on maturation. In terms of domain architecture, ShKT spans 51–86 (CVNIDVDSFCDGMAERGACNIIPQMATNCAKACNSC). 3 disulfides stabilise this stretch: Cys-51–Cys-86, Cys-60–Cys-79, and Cys-69–Cys-83.

It belongs to the sea anemone type 1 potassium channel toxin family. Type 1b subfamily.

Its subcellular location is the secreted. It is found in the nematocyst. In terms of biological role, inhibits voltage-gated potassium channels (Kv1/KCNA). This chain is U-actitoxin-Avd10a, found in Anemonia viridis (Snakelocks anemone).